A 64-amino-acid polypeptide reads, in one-letter code: Large ribosomal subunit protein bL28 (64 aa).

The protein belongs to the bacterial ribosomal protein bL28 family.

This is Large ribosomal subunit protein bL28 from Bifidobacterium adolescentis (strain ATCC 15703 / DSM 20083 / NCTC 11814 / E194a).